Reading from the N-terminus, the 1367-residue chain is MAP3K epsilon protein kinase 2 (1367 aa).

The Protein kinase domain occupies Tyr-20–Ile-274. HEAT repeat units follow at residues Glu-25 to Asn-62 and Leu-86 to Ile-125. Residues Ile-26–Val-34 and Lys-49 contribute to the ATP site. Asp-144 serves as the catalytic Proton acceptor. The stretch at Pro-218 to Lys-256 is one HEAT 3 repeat. 2 disordered regions span residues Leu-285–Asn-422 and Ser-437–Gly-513. The span at Tyr-293–Glu-306 shows a compositional bias: basic and acidic residues. Residues Leu-351 to Asn-363 show a composition bias toward acidic residues. Polar residues predominate over residues Arg-378–Val-396. 2 stretches are compositionally biased toward basic and acidic residues: residues Leu-397–Ile-408 and Ser-475–Thr-491. The segment covering Asn-492 to Asp-507 has biased composition (polar residues). 5 HEAT repeats span residues Ser-538–Leu-576, Gln-577–Gln-614, Ile-633–Glu-658, Asn-659–Leu-700, and Met-704–Leu-742. The segment at Pro-792–Leu-860 is disordered. Polar residues-rich tracts occupy residues Leu-799 to Ser-814 and Ala-835 to Val-845. Over residues His-846 to Arg-859 the composition is skewed to basic and acidic residues. 10 HEAT repeats span residues Ala-850–Lys-888, Asp-906–Arg-943, Asp-1045–Ser-1066, Tyr-1067–Cys-1105, Ala-1112–Arg-1150, Gln-1154–Asn-1191, Leu-1196–Gln-1236, Arg-1257–Leu-1280, Ala-1281–Lys-1317, and Gln-1347–Leu-1367.

The protein belongs to the protein kinase superfamily. Ser/Thr protein kinase family. Autophosphorylated. Expressed in both the sporophytic and the gametophytic tissues, especially in dividing cells. Mostly present in flower buds and mature flowers. Also accumulates in embryos and in roots.

The protein resides in the cytoplasm. Its subcellular location is the cytoskeleton. It is found in the microtubule organizing center. It localises to the nucleus. The protein localises to the nucleolus. The protein resides in the cell membrane. The catalysed reaction is L-seryl-[protein] + ATP = O-phospho-L-seryl-[protein] + ADP + H(+). The enzyme catalyses L-threonyl-[protein] + ATP = O-phospho-L-threonyl-[protein] + ADP + H(+). Functionally, serine/threonine-protein kinase involved in the spatial and temporal control system organizing cortical activities in mitotic and postmitotic cells. Required for the normal functioning of the plasma membrane in developing pollen. Involved in the regulation of cell expansion and embryo development. The chain is MAP3K epsilon protein kinase 2 from Arabidopsis thaliana (Mouse-ear cress).